The primary structure comprises 240 residues: UDP-2,3-diacylglucosamine hydrolase (240 aa).

Mn(2+) contacts are provided by D8, H10, D41, N79, and H114. 79-80 (NR) provides a ligand contact to substrate. Substrate is bound by residues D122, S160, N164, K167, and H195. The Mn(2+) site is built by H195 and H197.

This sequence belongs to the LpxH family. Mn(2+) is required as a cofactor.

Its subcellular location is the cell inner membrane. It catalyses the reaction UDP-2-N,3-O-bis[(3R)-3-hydroxytetradecanoyl]-alpha-D-glucosamine + H2O = 2-N,3-O-bis[(3R)-3-hydroxytetradecanoyl]-alpha-D-glucosaminyl 1-phosphate + UMP + 2 H(+). It functions in the pathway glycolipid biosynthesis; lipid IV(A) biosynthesis; lipid IV(A) from (3R)-3-hydroxytetradecanoyl-[acyl-carrier-protein] and UDP-N-acetyl-alpha-D-glucosamine: step 4/6. Hydrolyzes the pyrophosphate bond of UDP-2,3-diacylglucosamine to yield 2,3-diacylglucosamine 1-phosphate (lipid X) and UMP by catalyzing the attack of water at the alpha-P atom. Involved in the biosynthesis of lipid A, a phosphorylated glycolipid that anchors the lipopolysaccharide to the outer membrane of the cell. This Salmonella dublin (strain CT_02021853) protein is UDP-2,3-diacylglucosamine hydrolase.